The following is a 205-amino-acid chain: Metal-independent carbonic anhydrase (205 aa).

Residues 1–24 form the signal peptide; it reads MNLFKPRILVLFAATALISGIAIV. Positions 106 and 124 each coordinate hydrogencarbonate.

It belongs to the iota-class carbonic anhydrase family. As to quaternary structure, homotetramer; dimer of dimers. It depends on Does not require a metal cofactor. as a cofactor.

The enzyme catalyses hydrogencarbonate + H(+) = CO2 + H2O. Its activity is regulated as follows. Activity is not affected by EDTA or 2,6-pyridinedicarboxylic acid (PDA). Activity is not affected by addition of most divalent metal ions, except zinc ions which decrease the activity. Inhibited by the iodide ion. Functionally, catalyzes the hydration of carbon dioxide (CO2) to bicarbonate (HCO3(-)). Has only very low bicarbonate dehydration activity. May function even in metal-poor environments. The chain is Metal-independent carbonic anhydrase from Nostoc sp. (strain PCC 7120 / SAG 25.82 / UTEX 2576).